The sequence spans 110 residues: Endoribonuclease SymE (110 aa).

The SpoVT-AbrB domain occupies 29 to 74 (SSYPEYTRIPAITLKGQWLEDAGFTTGTQVDVRVMNGCIVLTAQQP).

This sequence belongs to the SymE family.

It is found in the cytoplasm. In terms of biological role, involved in the degradation and recycling of damaged RNA. It is itself a target for degradation by the ATP-dependent protease Lon. The polypeptide is Endoribonuclease SymE (Salmonella choleraesuis (strain SC-B67)).